We begin with the raw amino-acid sequence, 444 residues long: Tol-Pal system protein TolB (444 aa).

The N-terminal stretch at 1-19 (MRNIIYFILSLLFSVTSYA) is a signal peptide.

This sequence belongs to the TolB family. As to quaternary structure, the Tol-Pal system is composed of five core proteins: the inner membrane proteins TolA, TolQ and TolR, the periplasmic protein TolB and the outer membrane protein Pal. They form a network linking the inner and outer membranes and the peptidoglycan layer.

Its subcellular location is the periplasm. Its function is as follows. Part of the Tol-Pal system, which plays a role in outer membrane invagination during cell division and is important for maintaining outer membrane integrity. This is Tol-Pal system protein TolB from Rickettsia conorii (strain ATCC VR-613 / Malish 7).